A 156-amino-acid chain; its full sequence is Small ribosomal subunit protein uS7 (156 aa).

The protein belongs to the universal ribosomal protein uS7 family. In terms of assembly, part of the 30S ribosomal subunit. Contacts proteins S9 and S11.

In terms of biological role, one of the primary rRNA binding proteins, it binds directly to 16S rRNA where it nucleates assembly of the head domain of the 30S subunit. Is located at the subunit interface close to the decoding center, probably blocks exit of the E-site tRNA. The chain is Small ribosomal subunit protein uS7 from Methylobacterium radiotolerans (strain ATCC 27329 / DSM 1819 / JCM 2831 / NBRC 15690 / NCIMB 10815 / 0-1).